A 96-amino-acid polypeptide reads, in one-letter code: UPF0235 protein YPK_0828 (96 aa).

It belongs to the UPF0235 family.

The sequence is that of UPF0235 protein YPK_0828 from Yersinia pseudotuberculosis serotype O:3 (strain YPIII).